Consider the following 334-residue polypeptide: Probable fructose-bisphosphate aldolase class 1 (334 aa).

This sequence belongs to the class I fructose-bisphosphate aldolase family.

It catalyses the reaction beta-D-fructose 1,6-bisphosphate = D-glyceraldehyde 3-phosphate + dihydroxyacetone phosphate. Its pathway is carbohydrate degradation; glycolysis; D-glyceraldehyde 3-phosphate and glycerone phosphate from D-glucose: step 4/4. The protein is Probable fructose-bisphosphate aldolase class 1 of Xanthomonas campestris pv. campestris (strain ATCC 33913 / DSM 3586 / NCPPB 528 / LMG 568 / P 25).